Reading from the N-terminus, the 201-residue chain is UPF0301 protein MAP_0045 (201 aa).

It belongs to the UPF0301 (AlgH) family.

This is UPF0301 protein MAP_0045 from Mycolicibacterium paratuberculosis (strain ATCC BAA-968 / K-10) (Mycobacterium paratuberculosis).